The chain runs to 196 residues: Recombination protein RecR (196 aa).

Residues 56 to 71 form a C4-type zinc finger; the sequence is CPVCGGLDSQQPCMIC. Positions 78 to 172 constitute a Toprim domain; sequence PLICVVETVA…SVTRLAQGVP (95 aa).

Belongs to the RecR family.

May play a role in DNA repair. It seems to be involved in an RecBC-independent recombinational process of DNA repair. It may act with RecF and RecO. This chain is Recombination protein RecR, found in Acidiphilium cryptum (strain JF-5).